Reading from the N-terminus, the 699-residue chain is MNPSEMQRKAPPRRRRHRNRAPLTHKMNKMVTSEEQMKLPSTKKAEPPTWAQLKKLTQLATKYLENTKVTQTPESMLLAALMIVSMVVSLPMPAGAAVANYTNWAYVPFPPLIRAVTWMDNPIEVYVNDSVWVPGPIDDRCPAKPEEEGMMINISIGYRYPPICLGRAPGCLMPAVQNWLVEVPTVSPISRFTYHMVSGMSLRPRVNYLQDFSYQRSLKFRPKGKPCPKEIPKESKNTEVLVWEECVANSAVILQNNEFGTIIDWAPRGQFYHNCSGQTQSCPSAQVSPAVDSDLTESLDKHKHKKLQSFYPWEWGEKRISTPRPKIVSPVSGPEHPELWRLTVASHHIRIWSGNQTLETRDRKPFYTVDLNSSLTLPLQSCVKPPYMLVVGNIVIKPDSQTITCENCRLLTCIDSTFNWQHRILLVRAREGVWIPVSMDRPWEASPSVHILTEVLKGVLNRSKRFIFTLIAVIMGLIAVTATAAVAGVALHSSVQSVNFVNDGQKNSTRLWNSQSSIDQKLANQINDLRQTVIWMGDRLMSLEHRFQLQCDWNTSDFCITPQIYNDSEHHWDMVRRHLQGREDNLTLDISKLKEQIFEASKAHLNLVPGTEAIAGVADGLANLNPVTWVKTIGSTTIINLILILVCLFCLLLVCRCTQQLRRDSDHRERAMMTMAVLSKRKGGNVGKSKRDQIVTVSV.

Positions 1 to 47 are disordered; it reads MNPSEMQRKAPPRRRRHRNRAPLTHKMNKMVTSEEQMKLPSTKKAEP. Positions 1 to 89 are cleaved as a signal peptide; sequence MNPSEMQRKA…ALMIVSMVVS (89 aa). Basic residues predominate over residues 10-20; it reads APPRRRRHRNR. At 90–632 the chain is on the extracellular side; the sequence is LPMPAGAAVA…NLNPVTWVKT (543 aa). Residues Asn100, Asn128, Asn153, Asn274, Asn355, Asn372, and Asn461 are each glycosylated (N-linked (GlcNAc...) asparagine). The fusion peptide stretch occupies residues 466–486; that stretch reads FIFTLIAVIMGLIAVTATAAV. Asn507, Asn554, Asn566, and Asn585 each carry an N-linked (GlcNAc...) asparagine glycan. The chain crosses the membrane as a helical span at residues 633-653; sequence IGSTTIINLILILVCLFCLLL. Over 654 to 699 the chain is Cytoplasmic; the sequence is VCRCTQQLRRDSDHRERAMMTMAVLSKRKGGNVGKSKRDQIVTVSV.

The protein belongs to the beta type-B retroviral envelope protein family. HERV class-II K(HML-2) env subfamily. The surface (SU) and transmembrane (TM) proteins form a heterodimer. SU and TM are attached by noncovalent interactions or by a labile interchain disulfide bond. Post-translationally, specific enzymatic cleavages in vivo yield the mature SU and TM proteins.

It localises to the cell membrane. The protein resides in the virion. Functionally, retroviral envelope proteins mediate receptor recognition and membrane fusion during early infection. Endogenous envelope proteins may have kept, lost or modified their original function during evolution. This endogenous envelope protein has lost its original fusogenic properties. In terms of biological role, SU mediates receptor recognition. Its function is as follows. TM anchors the envelope heterodimer to the viral membrane through one transmembrane domain. The other hydrophobic domain, called fusion peptide, mediates fusion of the viral membrane with the target cell membrane. This chain is Endogenous retrovirus group K member 8 Env polyprotein (ERVK-8), found in Homo sapiens (Human).